A 100-amino-acid polypeptide reads, in one-letter code: Small ribosomal subunit protein uS14c (100 aa).

Belongs to the universal ribosomal protein uS14 family. In terms of assembly, part of the 30S ribosomal subunit.

The protein localises to the plastid. The protein resides in the chloroplast. Functionally, binds 16S rRNA, required for the assembly of 30S particles. The sequence is that of Small ribosomal subunit protein uS14c from Amborella trichopoda.